The following is a 72-amino-acid chain: Sec-independent protein translocase protein TatA (72 aa).

Residues 1–21 (MGSFSIWHWLIVLAVVLLLFG) traverse the membrane as a helical segment. The interval 43 to 72 (MADEDAKEDPRTIDAKAEEPVKDVKKTTKS) is disordered. Residues 50–72 (EDPRTIDAKAEEPVKDVKKTTKS) show a composition bias toward basic and acidic residues.

It belongs to the TatA/E family. As to quaternary structure, the Tat system comprises two distinct complexes: a TatABC complex, containing multiple copies of TatA, TatB and TatC subunits, and a separate TatA complex, containing only TatA subunits. Substrates initially bind to the TatABC complex, which probably triggers association of the separate TatA complex to form the active translocon.

It localises to the cell inner membrane. In terms of biological role, part of the twin-arginine translocation (Tat) system that transports large folded proteins containing a characteristic twin-arginine motif in their signal peptide across membranes. TatA could form the protein-conducting channel of the Tat system. The protein is Sec-independent protein translocase protein TatA of Brucella suis biovar 1 (strain 1330).